The following is a 367-amino-acid chain: MQDEYYMARALKLAQRGRFTTHPNPNVGCVIVKDGEIVGEGYHQRAGEPHAEVHALRMAGEKAKGATAYVTLEPCSHHGRTPPCCDALIAAGVARVVASMQDPNPQVAGRGLYRLQQAGIDVSHGLMMSEAEQLNKGFLKRMRTGFPYIQLKLGASLDGRTAMASGESQWITSPQARRDVQLLRAQSHAILTSSATVLADDPALTVRWSELDEQTQALYPQQNLRQPIRIVIDSQNRVTPVHRIVQQPGETWFARTQEDSREWPETVRTLLIPEHKGHLDLVVLMMQLGKQQINSIWVEAGPTLAGALLQAGLVDELIVYIAPKLLGSDARGLCTLPGLEKLADAPQFKFKEIRHVGPDVCLHLVGA.

Residues 1–123 form the CMP/dCMP-type deaminase domain; it reads MQDEYYMARA…RLQQAGIDVS (123 aa). The segment at 1 to 145 is deaminase; sequence MQDEYYMARA…KGFLKRMRTG (145 aa). His-50 provides a ligand contact to Zn(2+). Catalysis depends on Glu-52, which acts as the Proton donor. 2 residues coordinate Zn(2+): Cys-75 and Cys-84. The reductase stretch occupies residues 146 to 367; sequence FPYIQLKLGA…PDVCLHLVGA (222 aa). 161–164 contacts NADP(+); sequence TAMA. Ser-168 provides a ligand contact to substrate. Trp-170 is an NADP(+) binding site. Arg-184 contacts substrate. Positions 196 and 200 each coordinate NADP(+). Residues Leu-204 and Arg-207 each coordinate substrate. Position 234 (Ser-234) interacts with NADP(+). Glu-299 is a substrate binding site. 301–304 lines the NADP(+) pocket; sequence GPTL.

It in the N-terminal section; belongs to the cytidine and deoxycytidylate deaminase family. In the C-terminal section; belongs to the HTP reductase family. In terms of assembly, homodimer. Requires Zn(2+) as cofactor.

The catalysed reaction is 2,5-diamino-6-hydroxy-4-(5-phosphoribosylamino)-pyrimidine + H2O + H(+) = 5-amino-6-(5-phospho-D-ribosylamino)uracil + NH4(+). It catalyses the reaction 5-amino-6-(5-phospho-D-ribitylamino)uracil + NADP(+) = 5-amino-6-(5-phospho-D-ribosylamino)uracil + NADPH + H(+). It participates in cofactor biosynthesis; riboflavin biosynthesis; 5-amino-6-(D-ribitylamino)uracil from GTP: step 2/4. Its pathway is cofactor biosynthesis; riboflavin biosynthesis; 5-amino-6-(D-ribitylamino)uracil from GTP: step 3/4. Functionally, converts 2,5-diamino-6-(ribosylamino)-4(3h)-pyrimidinone 5'-phosphate into 5-amino-6-(ribosylamino)-2,4(1h,3h)-pyrimidinedione 5'-phosphate. This Escherichia coli (strain K12) protein is Riboflavin biosynthesis protein RibD (ribD).